The primary structure comprises 236 residues: Pyridoxine 5'-phosphate synthase (236 aa).

Asn6 contributes to the 3-amino-2-oxopropyl phosphate binding site. 8 to 9 contacts 1-deoxy-D-xylulose 5-phosphate; that stretch reads DH. Residue Arg17 participates in 3-amino-2-oxopropyl phosphate binding. His42 functions as the Proton acceptor in the catalytic mechanism. Positions 44 and 49 each coordinate 1-deoxy-D-xylulose 5-phosphate. Glu69 serves as the catalytic Proton acceptor. Residue Thr99 coordinates 1-deoxy-D-xylulose 5-phosphate. The active-site Proton donor is His190. 3-amino-2-oxopropyl phosphate is bound by residues Gly191 and 212–213; that span reads GH.

The protein belongs to the PNP synthase family. As to quaternary structure, homooctamer; tetramer of dimers.

Its subcellular location is the cytoplasm. The catalysed reaction is 3-amino-2-oxopropyl phosphate + 1-deoxy-D-xylulose 5-phosphate = pyridoxine 5'-phosphate + phosphate + 2 H2O + H(+). Its pathway is cofactor biosynthesis; pyridoxine 5'-phosphate biosynthesis; pyridoxine 5'-phosphate from D-erythrose 4-phosphate: step 5/5. Catalyzes the complicated ring closure reaction between the two acyclic compounds 1-deoxy-D-xylulose-5-phosphate (DXP) and 3-amino-2-oxopropyl phosphate (1-amino-acetone-3-phosphate or AAP) to form pyridoxine 5'-phosphate (PNP) and inorganic phosphate. The chain is Pyridoxine 5'-phosphate synthase from Prosthecochloris aestuarii (strain DSM 271 / SK 413).